An 85-amino-acid chain; its full sequence is Large ribosomal subunit protein bL27 (85 aa).

The disordered stretch occupies residues 1 to 22 (MAHKKAGGSSRNGRDSESKRLG).

The protein belongs to the bacterial ribosomal protein bL27 family.

This chain is Large ribosomal subunit protein bL27, found in Tolumonas auensis (strain DSM 9187 / NBRC 110442 / TA 4).